We begin with the raw amino-acid sequence, 338 residues long: Phenylalanine--tRNA ligase alpha subunit (338 aa).

Glu-252 contacts Mg(2+).

It belongs to the class-II aminoacyl-tRNA synthetase family. Phe-tRNA synthetase alpha subunit type 1 subfamily. As to quaternary structure, tetramer of two alpha and two beta subunits. The cofactor is Mg(2+).

It is found in the cytoplasm. It catalyses the reaction tRNA(Phe) + L-phenylalanine + ATP = L-phenylalanyl-tRNA(Phe) + AMP + diphosphate + H(+). The chain is Phenylalanine--tRNA ligase alpha subunit from Pseudomonas syringae pv. syringae (strain B728a).